The sequence spans 165 residues: Choriogonadotropin subunit beta 7 (165 aa).

The signal sequence occupies residues 1–20 (MEMFQGLLLLLLLSMGGTWA). Intrachain disulfides connect cysteine 29–cysteine 77, cysteine 43–cysteine 92, cysteine 46–cysteine 130, cysteine 54–cysteine 108, cysteine 58–cysteine 110, and cysteine 113–cysteine 120. N-linked (GlcNAc...) asparagine glycans are attached at residues asparagine 33 and asparagine 50. The interval 131-165 (DDPRFQASSSSKAPPPSLPSPSRLPGPSDTPILPQ) is disordered. Serine 141, serine 147, serine 152, and serine 158 each carry an O-linked (GalNAc...) serine glycan. The segment covering 143 to 154 (APPPSLPSPSRL) has biased composition (pro residues).

The protein belongs to the glycoprotein hormones subunit beta family. In terms of assembly, heterodimer of a common alpha chain identical in LH, FSH, TSH and HCG and a unique beta chain distinct in each of the hormones and confers receptor and biological specificity. High expression in the placenta throughout pregnancy.

The protein localises to the secreted. Functionally, beta subunit of the human chorionic gonadotropin (hCG). hCG is a complex glycoprotein composed of two glycosylated subunits alpha and beta which are non-covalently associated. The alpha subunit is identical to those in the pituitary gonadotropin hormones (LH, FSH and TSH). The beta subunits are distinct in each of the hormones and confer receptor and biological specificity. Has an essential role for pregnancy and maternal adaptation. Stimulates the ovaries to synthesize the steroids that are essential for the maintenance of pregnancy. The chain is Choriogonadotropin subunit beta 7 from Homo sapiens (Human).